The following is a 28-amino-acid chain: Ranatuerin-2B (28 aa).

A disulfide bridge connects residues cysteine 23 and cysteine 28.

As to expression, expressed by the skin glands.

The protein resides in the secreted. Its function is as follows. Antibacterial activity against Gram-positive bacterium S.aureus and Gram-negative bacterium E.coli. Has activity against C.albicans. This chain is Ranatuerin-2B, found in Lithobates berlandieri (Rio Grande leopard frog).